The chain runs to 338 residues: Heat-inducible transcription repressor HrcA (338 aa).

The protein belongs to the HrcA family.

Negative regulator of class I heat shock genes (grpE-dnaK-dnaJ and groELS operons). Prevents heat-shock induction of these operons. The polypeptide is Heat-inducible transcription repressor HrcA (Bacillus anthracis (strain A0248)).